Reading from the N-terminus, the 126-residue chain is Probable V-type proton ATPase subunit G (126 aa).

The protein belongs to the V-ATPase G subunit family. As to quaternary structure, V-ATPase is a heteromultimeric enzyme made up of two complexes: the ATP-hydrolytic V1 complex and the proton translocation V0 complex. The V1 complex consists of three catalytic AB heterodimers that form a heterohexamer, three peripheral stalks each consisting of EG heterodimers, one central rotor including subunits D and F, and the regulatory subunits C and H. The proton translocation complex V0 consists of the proton transport subunit a, a ring of proteolipid subunits c9c'', rotary subunit d, subunits e and f, and the accessory subunits vah-19/Ac45 and vah-20/PRR. Interacts with ced-1.

Subunit of the V1 complex of vacuolar(H+)-ATPase (V-ATPase), a multisubunit enzyme composed of a peripheral complex (V1) that hydrolyzes ATP and a membrane integral complex (V0) that translocates protons. V-ATPase is responsible for acidifying and maintaining the pH of intracellular compartments and in some cell types, is targeted to the plasma membrane, where it is responsible for acidifying the extracellular environment. In neurons, required for necrotic cell death by promoting intracellular acidification. The chain is Probable V-type proton ATPase subunit G from Caenorhabditis elegans.